The primary structure comprises 268 residues: Thiazole synthase (268 aa).

Lysine 100 serves as the catalytic Schiff-base intermediate with DXP. 1-deoxy-D-xylulose 5-phosphate contacts are provided by residues glycine 161, 187 to 188 (AG), and 209 to 210 (NT). The segment at 248-268 (ATPSSPSEGMITGSPHSAANN) is disordered.

The protein belongs to the ThiG family. Homotetramer. Forms heterodimers with either ThiH or ThiS.

The protein localises to the cytoplasm. It catalyses the reaction [ThiS sulfur-carrier protein]-C-terminal-Gly-aminoethanethioate + 2-iminoacetate + 1-deoxy-D-xylulose 5-phosphate = [ThiS sulfur-carrier protein]-C-terminal Gly-Gly + 2-[(2R,5Z)-2-carboxy-4-methylthiazol-5(2H)-ylidene]ethyl phosphate + 2 H2O + H(+). It functions in the pathway cofactor biosynthesis; thiamine diphosphate biosynthesis. Functionally, catalyzes the rearrangement of 1-deoxy-D-xylulose 5-phosphate (DXP) to produce the thiazole phosphate moiety of thiamine. Sulfur is provided by the thiocarboxylate moiety of the carrier protein ThiS. In vitro, sulfur can be provided by H(2)S. This chain is Thiazole synthase, found in Nitrosomonas eutropha (strain DSM 101675 / C91 / Nm57).